The chain runs to 155 residues: Small ribosomal subunit protein mS86 (155 aa).

The transit peptide at 1-27 (MHYMGLFSRAGNIFRQPRALQASNAML) directs the protein to the mitochondrion. An RRM domain is found at 36–114 (SKIFVGGLSP…RIIGVHPADS (79 aa)).

This sequence belongs to the GR-RBP family. In terms of assembly, component of the mitochondrial ribosome small subunit.

The protein localises to the mitochondrion. In terms of biological role, possibly has a role in RNA transcription or processing during stress. This chain is Small ribosomal subunit protein mS86 (RBG6), found in Arabidopsis thaliana (Mouse-ear cress).